Reading from the N-terminus, the 230-residue chain is 2-amino-5-formylamino-6-ribosylaminopyrimidin-4(3H)-one 5'-monophosphate deformylase (230 aa).

Residues Glu-29, His-31, Asp-40, and His-109 each contribute to the Fe cation site.

It belongs to the creatininase superfamily. FAPy deformylase family. Homodimer. Fe(2+) is required as a cofactor. It depends on Zn(2+) as a cofactor.

It carries out the reaction 2-amino-5-formylamino-6-(5-phospho-D-ribosylamino)pyrimidin-4(3H)-one + H2O = 2,5-diamino-6-(1-D-ribosylamino)pyrimidin-4(3H)-one 5'-phosphate + formate + H(+). It participates in cofactor biosynthesis; coenzyme F420 biosynthesis. It functions in the pathway cofactor biosynthesis; riboflavin biosynthesis. In terms of biological role, catalyzes the hydrolysis of the formamide of 2-amino-5-formylamino-6-ribosylamino-4(3H)-pyrimidinone 5'-monophosphate (FAPy) to form 2,5-diamino-6-ribosylamino-4(3H)-pyrimidinone 5'-phosphate (APy). In Methanobrevibacter smithii (strain ATCC 35061 / DSM 861 / OCM 144 / PS), this protein is 2-amino-5-formylamino-6-ribosylaminopyrimidin-4(3H)-one 5'-monophosphate deformylase.